Here is a 174-residue protein sequence, read N- to C-terminus: Adenine phosphoribosyltransferase (174 aa).

It belongs to the purine/pyrimidine phosphoribosyltransferase family. As to quaternary structure, homodimer.

The protein localises to the cytoplasm. The catalysed reaction is AMP + diphosphate = 5-phospho-alpha-D-ribose 1-diphosphate + adenine. It functions in the pathway purine metabolism; AMP biosynthesis via salvage pathway; AMP from adenine: step 1/1. Functionally, catalyzes a salvage reaction resulting in the formation of AMP, that is energically less costly than de novo synthesis. The polypeptide is Adenine phosphoribosyltransferase (Mycolicibacterium vanbaalenii (strain DSM 7251 / JCM 13017 / BCRC 16820 / KCTC 9966 / NRRL B-24157 / PYR-1) (Mycobacterium vanbaalenii)).